The chain runs to 461 residues: Bifunctional protein GlmU (461 aa).

The pyrophosphorylase stretch occupies residues 1-232 (MNLQIIILAA…SFEVQGINNR (232 aa)). Residues 8–11 (LAAG), K22, Q73, and 78–79 (GT) each bind UDP-N-acetyl-alpha-D-glucosamine. Mg(2+) is bound at residue D102. UDP-N-acetyl-alpha-D-glucosamine is bound by residues G142, E157, and N230. Position 230 (N230) interacts with Mg(2+). Residues 233–253 (QQLQQLERIWQQRAANQLMEK) form a linker region. The N-acetyltransferase stretch occupies residues 254–461 (GVTLADANRF…WKRPAKRERD (208 aa)). UDP-N-acetyl-alpha-D-glucosamine-binding residues include R336 and K354. The active-site Proton acceptor is H366. UDP-N-acetyl-alpha-D-glucosamine is bound by residues Y369 and N380. Acetyl-CoA contacts are provided by residues A383, 389–390 (NY), S408, and A426.

The protein in the N-terminal section; belongs to the N-acetylglucosamine-1-phosphate uridyltransferase family. It in the C-terminal section; belongs to the transferase hexapeptide repeat family. As to quaternary structure, homotrimer. It depends on Mg(2+) as a cofactor.

The protein resides in the cytoplasm. It carries out the reaction alpha-D-glucosamine 1-phosphate + acetyl-CoA = N-acetyl-alpha-D-glucosamine 1-phosphate + CoA + H(+). The enzyme catalyses N-acetyl-alpha-D-glucosamine 1-phosphate + UTP + H(+) = UDP-N-acetyl-alpha-D-glucosamine + diphosphate. Its pathway is nucleotide-sugar biosynthesis; UDP-N-acetyl-alpha-D-glucosamine biosynthesis; N-acetyl-alpha-D-glucosamine 1-phosphate from alpha-D-glucosamine 6-phosphate (route II): step 2/2. It participates in nucleotide-sugar biosynthesis; UDP-N-acetyl-alpha-D-glucosamine biosynthesis; UDP-N-acetyl-alpha-D-glucosamine from N-acetyl-alpha-D-glucosamine 1-phosphate: step 1/1. It functions in the pathway bacterial outer membrane biogenesis; LPS lipid A biosynthesis. Its function is as follows. Catalyzes the last two sequential reactions in the de novo biosynthetic pathway for UDP-N-acetylglucosamine (UDP-GlcNAc). The C-terminal domain catalyzes the transfer of acetyl group from acetyl coenzyme A to glucosamine-1-phosphate (GlcN-1-P) to produce N-acetylglucosamine-1-phosphate (GlcNAc-1-P), which is converted into UDP-GlcNAc by the transfer of uridine 5-monophosphate (from uridine 5-triphosphate), a reaction catalyzed by the N-terminal domain. This chain is Bifunctional protein GlmU, found in Legionella pneumophila (strain Lens).